Reading from the N-terminus, the 790-residue chain is Tumor necrosis factor alpha-induced protein 3 (790 aa).

N-acetylalanine is present on Ala2. A TRAF-binding region spans residues 58 to 300 (PQFREIIHKA…LTDPENEMKE (243 aa)). Residues 92-263 (LVALKTNGDG…SHHFVPLVTL (172 aa)) enclose the OTU domain. Residue Asp100 is part of the active site. The Nucleophile role is filled by Cys103. Interaction with ubiquitin regions lie at residues 157–159 (LCY), 190–192 (SLE), and 224–227 (FAPL). His256 functions as the Proton acceptor in the catalytic mechanism. The segment at 369–775 (AQNPMESSLP…ACDHFGNAKC (407 aa)) is interaction with TNIP1. Residues 381–416 (SLMDVKCETPNCPFFMSVNTQPLCHECSERRQKNQN) form an A20-type 1 zinc finger. The interval 386–453 (KCETPNCPFF…EPLAWNPEEP (68 aa)) is interaction with RIPK1. Cys387, Cys392, Cys404, and Cys407 together coordinate Zn(2+). The interval 415 to 467 (QNKLPKLNSKPGPEGLPGMALGASRGEAYEPLAWNPEEPTGGPHSAPPTAPSP) is disordered. At Ser459 the chain carries Phosphoserine. 2 A20-type zinc fingers span residues 472–507 (ETTA…LHAS) and 515–548 (HLDP…AEAS). Zn(2+) is bound by residues Cys478, Cys483, Cys495, Cys498, Cys521, Cys524, Cys536, and Cys539. Residues 550-580 (SLSTSLPPSCHQRSKSDPSQLVRSPSPHSCH) form a disordered region. The span at 566–576 (DPSQLVRSPSP) shows a compositional bias: polar residues. Ser575 is subject to Phosphoserine. The A20-type 4 zinc finger occupies 601 to 636 (RTGTSKCRKAGCMYFGTPENKGFCTLCFIEYRENKH). The required for proteasomal degradation of UBE2N and UBE2D3, TRAF6 deubiquitination, and TAX1BP1 interaction with UBE2N stretch occupies residues 605–655 (SKCRKAGCMYFGTPENKGFCTLCFIEYRENKHLVAASGKASPTASRFQNTI). Residues 606–790 (KCRKAGCMYF…ECFQFKQMYG (185 aa)) form a sufficient for inhibitory activity of TNF-induced NF-kappa-B activity region. Zn(2+)-binding residues include Cys607, Cys612, Cys624, and Cys627. Ser645 is subject to Phosphoserine. The A20-type 5 zinc-finger motif lies at 651–686 (FQNTIPCLGRECGTLGSTMFEGYCQKCFIEAQNQRF). The Zn(2+) site is built by Cys657, Cys662, Cys674, and Cys677. Residues 689–705 (AKRTEEQLRSSQRRDVP) are compositionally biased toward basic and acidic residues. The disordered stretch occupies residues 689-712 (AKRTEEQLRSSQRRDVPRTTQSTS). The tract at residues 697-790 (RSSQRRDVPR…ECFQFKQMYG (94 aa)) is required for lysosomal localization and for TRAF2 lysosomal degradation. 2 A20-type zinc fingers span residues 710–745 (STSR…RMGP) and 756–790 (DPPK…QMYG). Cys716, Cys721, Cys733, Cys736, Cys762, Cys767, Cys779, and Cys782 together coordinate Zn(2+).

Belongs to the peptidase C64 family. Homodimer. Interacts with TNIP1, TAX1BP1 and TRAF2. Interacts with RNF11, ITCH and TAX1BP1 only after TNF stimulation; these interaction are transient and they are lost after 1 hour of stimulation with TNF. Interacts with YWHAZ and YWHAH. Interacts with IKBKG; the interaction is induced by TNF stimulation and by polyubiquitin. Interacts with RIPK1. Interacts with UBE2N; the interaction requires TAX1BP1. Interacts with TRAF6. Post-translationally, proteolytically cleaved by MALT1 upon TCR stimulation; disrupts NF-kappa-B inhibitory function and results in increased IL-2 production. It is proposed that only a fraction of TNFAIP3 colocalized with TCR and CBM complex is cleaved, leaving the main TNFAIP3 pool intact.

The protein resides in the cytoplasm. The protein localises to the nucleus. Its subcellular location is the lysosome. It carries out the reaction Thiol-dependent hydrolysis of ester, thioester, amide, peptide and isopeptide bonds formed by the C-terminal Gly of ubiquitin (a 76-residue protein attached to proteins as an intracellular targeting signal).. Functionally, ubiquitin-editing enzyme that contains both ubiquitin ligase and deubiquitinase activities. Involved in immune and inflammatory responses signaled by cytokines, such as TNF-alpha and IL-1 beta, or pathogens via Toll-like receptors (TLRs) through terminating NF-kappa-B activity. Essential component of a ubiquitin-editing protein complex, comprising also RNF11, ITCH and TAX1BP1, that ensures the transient nature of inflammatory signaling pathways. In cooperation with TAX1BP1 promotes disassembly of E2-E3 ubiquitin protein ligase complexes in IL-1R and TNFR-1 pathways; affected are at least E3 ligases TRAF6, TRAF2 and BIRC2, and E2 ubiquitin-conjugating enzymes UBE2N and UBE2D3. In cooperation with TAX1BP1 promotes ubiquitination of UBE2N and proteasomal degradation of UBE2N and UBE2D3. Upon TNF stimulation, deubiquitinates 'Lys-63'-polyubiquitin chains on RIPK1 and catalyzes the formation of 'Lys-48'-polyubiquitin chains. This leads to RIPK1 proteasomal degradation and consequently termination of the TNF- or LPS-mediated activation of NF-kappa-B. Deubiquitinates TRAF6 probably acting on 'Lys-63'-linked polyubiquitin. Upon T-cell receptor (TCR)-mediated T-cell activation, deubiquitinates 'Lys-63'-polyubiquitin chains on MALT1 thereby mediating disassociation of the CBM (CARD11:BCL10:MALT1) and IKK complexes and preventing sustained IKK activation. Deubiquitinates NEMO/IKBKG; the function is facilitated by TNIP1 and leads to inhibition of NF-kappa-B activation. Upon stimulation by bacterial peptidoglycans, probably deubiquitinates RIPK2. Can also inhibit I-kappa-B-kinase (IKK) through a non-catalytic mechanism which involves polyubiquitin; polyubiquitin promotes association with IKBKG and prevents IKK MAP3K7-mediated phosphorylation. Targets TRAF2 for lysosomal degradation. In vitro able to deubiquitinate 'Lys-11'-, 'Lys-48'- and 'Lys-63' polyubiquitin chains. Inhibitor of programmed cell death. Has a role in the function of the lymphoid system. Required for LPS-induced production of pro-inflammatory cytokines and IFN beta in LPS-tolerized macrophages. The chain is Tumor necrosis factor alpha-induced protein 3 (TNFAIP3) from Macaca fascicularis (Crab-eating macaque).